The chain runs to 95 residues: DASH complex subunit DAD3 (95 aa).

Belongs to the DASH complex DAD3 family. In terms of assembly, component of the DASH complex consisting of ASK1, DAD1, DAD2, DAD3, DAD4, DAM1, DUO1, HSK3, SPC19 and SPC34, with a stoichiometry of one copy of each subunit per complex. Multiple DASH complexes oligomerize to form a ring that encircles spindle microtubules and organizes the rod-like NDC80 complexes of the outer kinetochore. DASH complex oligomerization strengthens microtubule attachments. On cytoplasmic microtubules, DASH complexes appear to form patches instead of rings.

It localises to the chromosome. Its subcellular location is the centromere. The protein localises to the kinetochore. It is found in the cytoplasm. The protein resides in the cytoskeleton. It localises to the spindle. Its subcellular location is the nucleus. Component of the DASH complex that connects microtubules with kinetochores and couples microtubule depolymerisation to chromosome movement; it is involved in retrieving kinetochores to the spindle poles before their re-orientation on the spindle in early mitosis and allows microtubule depolymerization to pull chromosomes apart and resist detachment during anaphase. Kinetochores, consisting of a centromere-associated inner segment and a microtubule-contacting outer segment, play a crucial role in chromosome segregation by mediating the physical connection between centromeric DNA and microtubules. Kinetochores also serve as an input point for the spindle assembly checkpoint, which delays anaphase until all chromosomes have bioriented on the mitotic spindle. The chain is DASH complex subunit DAD3 from Chaetomium thermophilum (strain DSM 1495 / CBS 144.50 / IMI 039719) (Thermochaetoides thermophila).